Reading from the N-terminus, the 452-residue chain is Low-affinity putrescine importer PlaP (452 aa).

At 1 to 16 (MSHNVTPNTSRVELRK) the chain is on the cytoplasmic side. A helical membrane pass occupies residues 17–37 (TLTLVPVVMMGLAYMQPMTLF). The Periplasmic portion of the chain corresponds to 38–48 (DTFGIVSGLTD). Residues 49–69 (GHVPTAYAFALIAILFTALSY) form a helical membrane-spanning segment. The Cytoplasmic portion of the chain corresponds to 70–95 (GKLVRRYPSAGSAYTYAQKSISPTVG). The chain crosses the membrane as a helical span at residues 96-116 (FMVGWSSLLDYLFAPMINILL). At 117–123 (AKIYFEA) the chain is on the periplasmic side. Residues 124-144 (LVPSIPSWMFVVALVAFMTAF) traverse the membrane as a helical segment. The Cytoplasmic portion of the chain corresponds to 145 to 158 (NLRSLKSVANFNTV). Residues 159 to 179 (IVVLQVVLIAVILGMVVYGVF) form a helical membrane-spanning segment. Residues 180–199 (EGEGAGTLASTRPFWSGDAH) lie on the Periplasmic side of the membrane. The chain crosses the membrane as a helical span at residues 200–220 (VIPMITGATILCFSFTGFDGI). Topologically, residues 221–237 (SNLSEETKDAERVIPRA) are cytoplasmic. A helical membrane pass occupies residues 238 to 258 (IFLTALIGGMIFIFATYFLQL). Topologically, residues 259–283 (YFPDISRFKDPDASQPEIMLYVAGK) are periplasmic. A helical membrane pass occupies residues 284-304 (AFQVGALIFSTITVLASGMAA). Residues 305–339 (HAGVARLMYVMGRDGVFPKSFFGYVHPKWRTPAMN) lie on the Cytoplasmic side of the membrane. 2 consecutive transmembrane segments (helical) span residues 340–360 (IILVGAIALLAINFDLVMATA) and 361–381 (LINFGALVAFTFVNLSVISQF). The Cytoplasmic portion of the chain corresponds to 382 to 394 (WIREKRNKTLKDH). Residues 395–415 (FQYLFLPMCGALTVGALWVNL) form a helical membrane-spanning segment. At 416–417 (EE) the chain is on the periplasmic side. The helical transmembrane segment at 418–438 (SSMVLGLIWAAIGLIYLACVT) threads the bilayer. Residues 439-452 (KSFRNPVPQYEDVA) are Cytoplasmic-facing.

The protein belongs to the amino acid-polyamine-organocation (APC) superfamily.

The protein resides in the cell inner membrane. The enzyme catalyses putrescine(in) + H(+)(in) = putrescine(out) + H(+)(out). Putrescine importer. The protein is Low-affinity putrescine importer PlaP (plaP) of Escherichia coli O157:H7.